Here is a 163-residue protein sequence, read N- to C-terminus: MNPRRKKRLTIILAISAGLAAVIGLVLYALSQNIDLFYTPSELVEGKGPDKIKPEEGQRLRIGGLVVPGSVQRDPQSLKVAFKLVDNGGHLVTVEFDGILPDLFREGQGIVAQGTLKDATTVAAFEVLAKHDENYMPPEVADATNGMHFKPEYTEAQLKGSKQ.

At 1–8 the chain is on the cytoplasmic side; sequence MNPRRKKR. A helical; Signal-anchor for type II membrane protein transmembrane segment spans residues 9 to 29; sequence LTIILAISAGLAAVIGLVLYA. Residues 30 to 163 are Periplasmic-facing; it reads LSQNIDLFYT…TEAQLKGSKQ (134 aa). The heme site is built by H131 and Y135.

This sequence belongs to the CcmE/CycJ family.

Its subcellular location is the cell inner membrane. Functionally, heme chaperone required for the biogenesis of c-type cytochromes. Transiently binds heme delivered by CcmC and transfers the heme to apo-cytochromes in a process facilitated by CcmF and CcmH. This Aeromonas hydrophila subsp. hydrophila (strain ATCC 7966 / DSM 30187 / BCRC 13018 / CCUG 14551 / JCM 1027 / KCTC 2358 / NCIMB 9240 / NCTC 8049) protein is Cytochrome c-type biogenesis protein CcmE.